A 224-amino-acid chain; its full sequence is Small ribosomal subunit protein uS3 (224 aa).

The KH type-2 domain occupies 38 to 106 (IRKFISEKLK…QVHINIVEIK (69 aa)).

It belongs to the universal ribosomal protein uS3 family. In terms of assembly, part of the 30S ribosomal subunit. Forms a tight complex with proteins S10 and S14.

Binds the lower part of the 30S subunit head. Binds mRNA in the 70S ribosome, positioning it for translation. This chain is Small ribosomal subunit protein uS3, found in Lactobacillus acidophilus (strain ATCC 700396 / NCK56 / N2 / NCFM).